Reading from the N-terminus, the 600-residue chain is Alpha pinene synthase, chloroplastic (600 aa).

The interval 1-27 is disordered; that stretch reads MSSISMHAGPLNISAANNHHPSWDRRV. A chloroplast-targeting transit peptide spans 1–31; sequence MSSISMHAGPLNISAANNHHPSWDRRVSKPR. The Mg(2+) site is built by D354, D358, D498, and E506. Positions 354 to 358 match the DDXXD motif motif; it reads DDVYD.

It belongs to the terpene synthase family. Tpsa subfamily. Mg(2+) is required as a cofactor. It depends on Mn(2+) as a cofactor. As to expression, expressed at low levels in leaves.

The protein resides in the plastid. The protein localises to the chloroplast. The catalysed reaction is (2E)-geranyl diphosphate = alpha-pinene + diphosphate. It functions in the pathway secondary metabolite biosynthesis; terpenoid biosynthesis. Its function is as follows. Monoterpene synthase involved in the biosynthesis of volatile compounds widely used in aromatherapy and folk medicine, and present in culinary herbs. Mediates the conversion of (2E)-geranyl diphosphate (GPP) into alpha-pinene and, as minor compounds, into alpha-phellandrene, limonene and alpha-terpinolene. The polypeptide is Alpha pinene synthase, chloroplastic (Lavandula viridis (Green lavender)).